The primary structure comprises 1464 residues: Sister chromatid cohesion protein PDS5 homolog B-B (1464 aa).

One copy of the HEAT repeat lies at 383–419; the sequence is LLVNDQLLNFVRERTLDKRWRVRKEAMMGLAQIYKKY. Residues 1126–1464 are disordered; that stretch reads KSTNVLGAVN…MKSELEGPLL (339 aa). A compositionally biased stretch (polar residues) spans 1137-1155; that stretch reads PLSSAGKQMQSKSSRMETV. A compositionally biased stretch (low complexity) spans 1156-1168; it reads SNASSGSNPSSPG. A compositionally biased stretch (acidic residues) spans 1177-1186; the sequence is TELDQIEYED. 3 stretches are compositionally biased toward basic and acidic residues: residues 1197 to 1215, 1234 to 1244, and 1265 to 1274; these read KKSDKRDDSDLLKSEVEKP, ELSKPAQEPKS, and WQEKRLKEDL. Over residues 1286 to 1295 the composition is skewed to basic residues; it reads KKGRRGRPPK. Positions 1287–1299 form a DNA-binding region, a.T hook 1; sequence KGRRGRPPKSAKM. Over residues 1325–1342 the composition is skewed to acidic residues; sequence PTDEEDHLEISEEQDSEN. A compositionally biased stretch (basic residues) spans 1347-1357; the sequence is RKGRGSSKKTP. Residues 1359 to 1373 show a composition bias toward polar residues; sequence KSDSTDSALDTSRPT. 2 DNA-binding regions (a.T hook) span residues 1375-1387 and 1391-1403; these read QKRRGRPPKTPTV and KSHVGRPRKVVSK. Over residues 1390–1400 the composition is skewed to basic residues; it reads KKSHVGRPRKV. Residues 1425–1435 show a composition bias toward acidic residues; that stretch reads SNEEETADEEV. Residues 1441–1453 are compositionally biased toward basic residues; that stretch reads GRRRTAKKRRWIQ. Residues 1455–1464 are compositionally biased toward basic and acidic residues; it reads MKSELEGPLL.

This sequence belongs to the PDS5 family. As to quaternary structure, interacts with the cohesin complex. In terms of processing, phosphorylated in mitotic cells.

It localises to the nucleus. Plays a role in androgen-induced proliferative arrest. Required for maintenance of sister chromatid cohesion during mitosis. The sequence is that of Sister chromatid cohesion protein PDS5 homolog B-B (pds5b-b) from Xenopus laevis (African clawed frog).